The primary structure comprises 257 residues: tRNA pseudouridine synthase A (257 aa).

Aspartate 43 acts as the Nucleophile in catalysis. Residue tyrosine 94 participates in substrate binding.

Belongs to the tRNA pseudouridine synthase TruA family.

The catalysed reaction is uridine(38/39/40) in tRNA = pseudouridine(38/39/40) in tRNA. In terms of biological role, formation of pseudouridine at positions 38, 39 and 40 in the anticodon stem and loop of transfer RNAs. The polypeptide is tRNA pseudouridine synthase A (Pyrobaculum arsenaticum (strain DSM 13514 / JCM 11321 / PZ6)).